A 969-amino-acid chain; its full sequence is RNA polymerase-associated protein RapA (969 aa).

The Helicase ATP-binding domain occupies 162-339 (EVGQRVAPRV…FARLALLDAD (178 aa)). 175–182 (DEVGLGKT) serves as a coordination point for ATP. A DEAH box motif is present at residues 285 to 288 (DEAH). Positions 492–663 (RIEWLITFLK…IFLKNPQAVG (172 aa)) constitute a Helicase C-terminal domain.

Belongs to the SNF2/RAD54 helicase family. RapA subfamily. In terms of assembly, interacts with the RNAP. Has a higher affinity for the core RNAP than for the holoenzyme. Its ATPase activity is stimulated by binding to RNAP.

In terms of biological role, transcription regulator that activates transcription by stimulating RNA polymerase (RNAP) recycling in case of stress conditions such as supercoiled DNA or high salt concentrations. Probably acts by releasing the RNAP, when it is trapped or immobilized on tightly supercoiled DNA. Does not activate transcription on linear DNA. Probably not involved in DNA repair. The sequence is that of RNA polymerase-associated protein RapA from Actinobacillus pleuropneumoniae serotype 3 (strain JL03).